The following is a 295-amino-acid chain: Bifunctional protein FolD (295 aa).

NADP(+) contacts are provided by residues 166-168 (GRS), serine 191, and isoleucine 232.

This sequence belongs to the tetrahydrofolate dehydrogenase/cyclohydrolase family. In terms of assembly, homodimer.

The enzyme catalyses (6R)-5,10-methylene-5,6,7,8-tetrahydrofolate + NADP(+) = (6R)-5,10-methenyltetrahydrofolate + NADPH. The catalysed reaction is (6R)-5,10-methenyltetrahydrofolate + H2O = (6R)-10-formyltetrahydrofolate + H(+). The protein operates within one-carbon metabolism; tetrahydrofolate interconversion. Its function is as follows. Catalyzes the oxidation of 5,10-methylenetetrahydrofolate to 5,10-methenyltetrahydrofolate and then the hydrolysis of 5,10-methenyltetrahydrofolate to 10-formyltetrahydrofolate. In Rhodopseudomonas palustris (strain HaA2), this protein is Bifunctional protein FolD.